We begin with the raw amino-acid sequence, 312 residues long: tRNA uridine(34) hydroxylase (312 aa).

Residues 123-217 (SDPEVLLIDT…YLEEVPQEQS (95 aa)) enclose the Rhodanese domain. Residue Cys-177 is the Cysteine persulfide intermediate of the active site. A compositionally biased stretch (basic and acidic residues) spans 282–293 (ARERQKQIELAR). The disordered stretch occupies residues 282-312 (ARERQKQIELARQRNQPHPLGRDPRQSTLEN).

Belongs to the TrhO family.

The enzyme catalyses uridine(34) in tRNA + AH2 + O2 = 5-hydroxyuridine(34) in tRNA + A + H2O. Its function is as follows. Catalyzes oxygen-dependent 5-hydroxyuridine (ho5U) modification at position 34 in tRNAs. In Pseudomonas aeruginosa (strain UCBPP-PA14), this protein is tRNA uridine(34) hydroxylase.